Here is a 320-residue protein sequence, read N- to C-terminus: Ferrochelatase (320 aa).

H194 and E275 together coordinate Fe cation.

The protein belongs to the ferrochelatase family. In terms of assembly, monomer.

The protein localises to the cytoplasm. It carries out the reaction heme b + 2 H(+) = protoporphyrin IX + Fe(2+). It functions in the pathway porphyrin-containing compound metabolism; protoheme biosynthesis; protoheme from protoporphyrin-IX: step 1/1. Its function is as follows. Catalyzes the ferrous insertion into protoporphyrin IX. The polypeptide is Ferrochelatase (Salmonella paratyphi A (strain ATCC 9150 / SARB42)).